The following is a 335-amino-acid chain: Probable deoxyhypusine synthase (335 aa).

The Nucleophile role is filled by lysine 308.

It belongs to the deoxyhypusine synthase family. NAD(+) is required as a cofactor.

It carries out the reaction [eIF5A protein]-L-lysine + spermidine = [eIF5A protein]-deoxyhypusine + propane-1,3-diamine. It functions in the pathway protein modification; eIF5A hypusination. Catalyzes the NAD-dependent oxidative cleavage of spermidine and the subsequent transfer of the butylamine moiety of spermidine to the epsilon-amino group of a specific lysine residue of the eIF-5A precursor protein to form the intermediate deoxyhypusine residue. The protein is Probable deoxyhypusine synthase of Thermococcus onnurineus (strain NA1).